The chain runs to 234 residues: ATP synthase subunit a 1 (234 aa).

The next 6 membrane-spanning stretches (helical) occupy residues 29–49, 90–110, 116–136, 147–167, 186–206, and 207–227; these read FLVHVTHAWLIMLLLTGVALL, LIATLALFILFSNLIALIPGF, NLNTNAALALAVFGMTHVVGV, FVGPVWWLAPLILPIEIIGHL, IVLVIFFTLVPLLLPIPMMLM, and GILVAFIQTFVFTLLAMIYIA.

This sequence belongs to the ATPase A chain family. F-type ATPases have 2 components, CF(1) - the catalytic core - and CF(0) - the membrane proton channel. CF(1) has five subunits: alpha(3), beta(3), gamma(1), delta(1), epsilon(1). CF(0) has three main subunits: a(1), b(2) and c(9-12). The alpha and beta chains form an alternating ring which encloses part of the gamma chain. CF(1) is attached to CF(0) by a central stalk formed by the gamma and epsilon chains, while a peripheral stalk is formed by the delta and b chains.

Its subcellular location is the cell inner membrane. Key component of the proton channel; it plays a direct role in the translocation of protons across the membrane. In Syntrophotalea carbinolica (strain DSM 2380 / NBRC 103641 / GraBd1) (Pelobacter carbinolicus), this protein is ATP synthase subunit a 1.